The sequence spans 146 residues: 3-dehydroquinate dehydratase (146 aa).

Residue Tyr23 is the Proton acceptor of the active site. 3 residues coordinate substrate: Asn79, His85, and Asp92. The active-site Proton donor is the His105. Substrate-binding positions include 106–107 and Arg116; that span reads IS.

It belongs to the type-II 3-dehydroquinase family. In terms of assembly, homododecamer.

It catalyses the reaction 3-dehydroquinate = 3-dehydroshikimate + H2O. It participates in metabolic intermediate biosynthesis; chorismate biosynthesis; chorismate from D-erythrose 4-phosphate and phosphoenolpyruvate: step 3/7. Catalyzes a trans-dehydration via an enolate intermediate. This is 3-dehydroquinate dehydratase from Variovorax paradoxus (strain S110).